We begin with the raw amino-acid sequence, 277 residues long: Shikimate dehydrogenase (NADP(+)) (277 aa).

Residues 15–17 (SLS) and T62 contribute to the shikimate site. K66 functions as the Proton acceptor in the catalytic mechanism. Shikimate contacts are provided by N87 and D102. NADP(+) contacts are provided by residues 127–131 (GAGGA), 151–156 (NRTVSK), and I219. Shikimate is bound at residue Y221. G242 contacts NADP(+).

The protein belongs to the shikimate dehydrogenase family. Homodimer.

The catalysed reaction is shikimate + NADP(+) = 3-dehydroshikimate + NADPH + H(+). It participates in metabolic intermediate biosynthesis; chorismate biosynthesis; chorismate from D-erythrose 4-phosphate and phosphoenolpyruvate: step 4/7. Involved in the biosynthesis of the chorismate, which leads to the biosynthesis of aromatic amino acids. Catalyzes the reversible NADPH linked reduction of 3-dehydroshikimate (DHSA) to yield shikimate (SA). The chain is Shikimate dehydrogenase (NADP(+)) from Geobacillus sp. (strain WCH70).